The primary structure comprises 388 residues: MKHLHRFFSSDASGGIILIIAAVLAMIMANSGATSGWYHDFLETPVQLRVGTLEINKNMLLWINDALMAVFFLLVGLEVKRELMQGSLASLRQAAFPVIAAIGGMIVPALLYLAFNYADPITREGWAIPAATDIAFALGVLALLGSRVPLALKIFLMALAIIDDLGAIIIIALFYTNDLSMASLGVAAVAIAVLVVLNLCGVRRTGVYILVGVVLWTAVLKSGVHATLAGVIVGFFIPLKEKHGRSPAKRLEHVLHPWVAYLILPLFAFANAGVSLQGVTLEGLTSILPLGIIAGLLIGKPLGISLFCWLALRLKLAHLPEGTTYQQIMAVGILCGIGFTMSIFIASLAFGSVDPELINWAKLGILVGSISSAVIGYSWLRVRLRPSV.

The Cytoplasmic portion of the chain corresponds to 1 to 11; the sequence is MKHLHRFFSSD. Residues 12-31 form a helical membrane-spanning segment; it reads ASGGIILIIAAVLAMIMANS. Residues 32 to 58 lie on the Periplasmic side of the membrane; it reads GATSGWYHDFLETPVQLRVGTLEINKN. Residues 59 to 80 traverse the membrane as a helical segment; sequence MLLWINDALMAVFFLLVGLEVK. Residues 81–96 lie on the Cytoplasmic side of the membrane; the sequence is RELMQGSLASLRQAAF. Residues 97 to 116 traverse the membrane as a helical segment; sequence PVIAAIGGMIVPALLYLAFN. Topologically, residues 117-122 are periplasmic; sequence YADPIT. The chain crosses the membrane as a helical span at residues 123 to 130; it reads REGWAIPA. The Cytoplasmic portion of the chain corresponds to 131–154; that stretch reads ATDIAFALGVLALLGSRVPLALKI. A helical transmembrane segment spans residues 155–176; the sequence is FLMALAIIDDLGAIIIIALFYT. At 177–180 the chain is on the periplasmic side; the sequence is NDLS. The chain crosses the membrane as a helical span at residues 181–200; the sequence is MASLGVAAVAIAVLVVLNLC. Residues 201 to 204 are Cytoplasmic-facing; the sequence is GVRR. The chain crosses the membrane as a helical span at residues 205–222; it reads TGVYILVGVVLWTAVLKS. Gly-223 is a topological domain (periplasmic). A helical transmembrane segment spans residues 224-236; it reads VHATLAGVIVGFF. Topologically, residues 237-253 are cytoplasmic; sequence IPLKEKHGRSPAKRLEH. The chain crosses the membrane as a helical span at residues 254–272; sequence VLHPWVAYLILPLFAFANA. Over 273-286 the chain is Periplasmic; sequence GVSLQGVTLEGLTS. A helical transmembrane segment spans residues 287 to 310; that stretch reads ILPLGIIAGLLIGKPLGISLFCWL. At 311-339 the chain is on the cytoplasmic side; sequence ALRLKLAHLPEGTTYQQIMAVGILCGIGF. A helical transmembrane segment spans residues 340–350; sequence TMSIFIASLAF. Topologically, residues 351 to 357 are periplasmic; the sequence is GSVDPEL. A helical transmembrane segment spans residues 358-380; the sequence is INWAKLGILVGSISSAVIGYSWL. The Cytoplasmic portion of the chain corresponds to 381–388; the sequence is RVRLRPSV.

The protein belongs to the NhaA Na(+)/H(+) (TC 2.A.33) antiporter family.

The protein resides in the cell inner membrane. It carries out the reaction Na(+)(in) + 2 H(+)(out) = Na(+)(out) + 2 H(+)(in). Na(+)/H(+) antiporter that extrudes sodium in exchange for external protons. This Escherichia coli O1:K1 / APEC protein is Na(+)/H(+) antiporter NhaA.